The sequence spans 357 residues: Serine proteinase inhibitor 1 (357 aa).

This sequence belongs to the serpin family. Poxviruses subfamily.

It is found in the host cytoplasm. This viral protein may be involved in the regulation of the complement cascade. Involved in red pock formation. The protein is Serine proteinase inhibitor 1 (SPI-1) of Oryctolagus cuniculus (Rabbit).